We begin with the raw amino-acid sequence, 327 residues long: Thiamine-monophosphate kinase (327 aa).

Mg(2+)-binding residues include D30, S45, S46, and D47. H54 is a binding site for substrate. A Mg(2+)-binding site is contributed by D76. Residues Y106, G123–D124, and R149 contribute to the ATP site. Residue D124 coordinates Mg(2+). Residue D221 participates in Mg(2+) binding. Residue S223 participates in ATP binding. D224 lines the Mg(2+) pocket. Residues E268 and F321 each contribute to the substrate site.

It belongs to the thiamine-monophosphate kinase family.

It carries out the reaction thiamine phosphate + ATP = thiamine diphosphate + ADP. Its pathway is cofactor biosynthesis; thiamine diphosphate biosynthesis; thiamine diphosphate from thiamine phosphate: step 1/1. Its function is as follows. Catalyzes the ATP-dependent phosphorylation of thiamine-monophosphate (TMP) to form thiamine-pyrophosphate (TPP), the active form of vitamin B1. In Synechococcus elongatus (strain ATCC 33912 / PCC 7942 / FACHB-805) (Anacystis nidulans R2), this protein is Thiamine-monophosphate kinase.